A 265-amino-acid chain; its full sequence is Early E4 31 kDa protein (265 aa).

Belongs to the adenoviridae E4 30 to 34 kDa protein family. As to quaternary structure, interacts with E1B-55k.

It localises to the host nucleus. Its subcellular location is the host cytoplasm. Plays a major role to prevent cellular inhibition of viral genome replication by nuclear bodies. Assembles an SCF-like E3 ubiquitin ligase complex based on the cellular proteins ELOB, ELOC, CUL5 and RBX1, in cooperation with viral E1B-55K. This viral RING-type ligase ubiquitinates cellular substrates prior to proteasomal degradation: p53/TP53, LIG4, MRE11-RAD50-NBS1 (MRN) complex, ITGA3, DAXX and BLM. The polypeptide is Early E4 31 kDa protein (Canine adenovirus serotype 1 (strain RI261) (CAdV-1)).